Consider the following 305-residue polypeptide: UDP-3-O-acyl-N-acetylglucosamine deacetylase (305 aa).

Zn(2+) is bound by residues His79, His238, and Asp242. The Proton donor role is filled by His265.

This sequence belongs to the LpxC family. Requires Zn(2+) as cofactor.

It carries out the reaction a UDP-3-O-[(3R)-3-hydroxyacyl]-N-acetyl-alpha-D-glucosamine + H2O = a UDP-3-O-[(3R)-3-hydroxyacyl]-alpha-D-glucosamine + acetate. It functions in the pathway glycolipid biosynthesis; lipid IV(A) biosynthesis; lipid IV(A) from (3R)-3-hydroxytetradecanoyl-[acyl-carrier-protein] and UDP-N-acetyl-alpha-D-glucosamine: step 2/6. Functionally, catalyzes the hydrolysis of UDP-3-O-myristoyl-N-acetylglucosamine to form UDP-3-O-myristoylglucosamine and acetate, the committed step in lipid A biosynthesis. This is UDP-3-O-acyl-N-acetylglucosamine deacetylase from Citrobacter koseri (strain ATCC BAA-895 / CDC 4225-83 / SGSC4696).